The chain runs to 396 residues: NADH-quinone oxidoreductase subunit D (396 aa).

Belongs to the complex I 49 kDa subunit family. In terms of assembly, NDH-1 is composed of 14 different subunits. Subunits NuoB, C, D, E, F, and G constitute the peripheral sector of the complex.

It localises to the cell inner membrane. The enzyme catalyses a quinone + NADH + 5 H(+)(in) = a quinol + NAD(+) + 4 H(+)(out). NDH-1 shuttles electrons from NADH, via FMN and iron-sulfur (Fe-S) centers, to quinones in the respiratory chain. The immediate electron acceptor for the enzyme in this species is believed to be ubiquinone. Couples the redox reaction to proton translocation (for every two electrons transferred, four hydrogen ions are translocated across the cytoplasmic membrane), and thus conserves the redox energy in a proton gradient. This chain is NADH-quinone oxidoreductase subunit D, found in Bartonella quintana (strain Toulouse) (Rochalimaea quintana).